A 537-amino-acid chain; its full sequence is Endoprotease aex-5 (537 aa).

An N-terminal signal peptide occupies residues 1–17 (MKLIFLLLLFGVSPIVC). Positions 18-99 (QDFEDGVFLA…KLQGFRRYKR (82 aa)) are excised as a propeptide. In terms of domain architecture, Peptidase S8 spans 111-413 (VWNLTPSLYI…FGLLNAQKLV (303 aa)). N129 carries an N-linked (GlcNAc...) asparagine glycan. Residues D139 and H178 each act as charge relay system in the active site. Residues C286 and C316 are joined by a disulfide bond. The Charge relay system role is filled by S346. N380 carries an N-linked (GlcNAc...) asparagine glycan. Positions 407–537 (LNAQKLVVMA…KMFKVVGTMS (131 aa)) constitute a P/Homo B domain.

It belongs to the peptidase S8 family. Furin subfamily.

It is found in the secreted. Probable serine endoprotease which cleaves preproteins at paired basic amino acids. May process FMRFamide-like (flp) and neuropeptide-like protein (nlp) neuropeptides. In muscles, involved in neuronal retrograde signaling by regulating presynaptic activity and localization of synaptic vesicle fusion protein unc-13 at the neuromuscular junction (NMJ). Acts in the intestine to regulate anterior body muscle contractions (aBOC) and the expulsion steps during the defecation motor program (DMP). Probably by regulating DMP, required for fatty acid uptake by intestinal cells and therefore regulates the levels of triglycerides in the intestine. Plays a role in locomotion. In Caenorhabditis elegans, this protein is Endoprotease aex-5.